We begin with the raw amino-acid sequence, 913 residues long: Translation initiation factor IF-2 (913 aa).

Residues 1-322 (MTDNNDDKTL…QEKFRRSQMQ (322 aa)) form a disordered region. Low complexity predominate over residues 60-113 (VQPVVAAPKPAAPAPVAARPQAPQPRIHQPGGQQQRPGSSQSQQRSGSSAPQQR). Basic and acidic residues predominate over residues 131 to 180 (MEARRRALMEAQARDVVEAKQRAEDEARRKVEEEQRIAAEKMEAANRAAE). Low complexity-rich tracts occupy residues 181–195 (EAAAAKVAASQPAAE), 203–238 (ERPAAAAAPAPRTDARPQSAAAAPRSAPATPDAAAP), and 261–277 (PARGKVVAPAPAKPAAR). The tr-type G domain occupies 411 to 578 (SRPPVVTIMG…AILLQAEILD (168 aa)). The G1 stretch occupies residues 420–427 (GHVDHGKT). 420–427 (GHVDHGKT) contacts GTP. The segment at 445 to 449 (GITQH) is G2. The segment at 466–469 (DTPG) is G3. GTP-binding positions include 466 to 470 (DTPGH) and 520 to 523 (NKID). The interval 520 to 523 (NKID) is G4. The segment at 556–558 (SAK) is G5.

The protein belongs to the TRAFAC class translation factor GTPase superfamily. Classic translation factor GTPase family. IF-2 subfamily.

The protein resides in the cytoplasm. In terms of biological role, one of the essential components for the initiation of protein synthesis. Protects formylmethionyl-tRNA from spontaneous hydrolysis and promotes its binding to the 30S ribosomal subunits. Also involved in the hydrolysis of GTP during the formation of the 70S ribosomal complex. The protein is Translation initiation factor IF-2 of Agrobacterium fabrum (strain C58 / ATCC 33970) (Agrobacterium tumefaciens (strain C58)).